The primary structure comprises 271 residues: Exosome complex component Rrp42 (271 aa).

The protein belongs to the RNase PH family. Rrp42 subfamily. Component of the archaeal exosome complex. Forms a hexameric ring-like arrangement composed of 3 Rrp41-Rrp42 heterodimers. The hexameric ring associates with a trimer of Rrp4 and/or Csl4 subunits.

It localises to the cytoplasm. Non-catalytic component of the exosome, which is a complex involved in RNA degradation. Contributes to the structuring of the Rrp41 active site. This is Exosome complex component Rrp42 from Methanothermobacter thermautotrophicus (strain ATCC 29096 / DSM 1053 / JCM 10044 / NBRC 100330 / Delta H) (Methanobacterium thermoautotrophicum).